The chain runs to 195 residues: CASP-like protein 1B1 (195 aa).

The Cytoplasmic segment spans residues 1 to 15; that stretch reads MAKLALAATSGKSCK. Residues 16 to 36 traverse the membrane as a helical segment; that stretch reads ILLGLRLLAFSATLSAAIVMG. The Extracellular segment spans residues 37 to 67; the sequence is LNKETETFVVGKVGNTPIKATFTAKFDHTPA. The helical transmembrane segment at 68 to 88 threads the bilayer; that stretch reads FVFFVVANAMVSFHNLLMIAL. Topologically, residues 89-104 are cytoplasmic; the sequence is QIFGGKMEFTGFRLLS. The chain crosses the membrane as a helical span at residues 105-125; sequence VAILDMLNVTLISAAANAAAF. Topologically, residues 126-154 are extracellular; the sequence is MAEVGKNGNKHARWDKICDRFATYCDHGA. A helical membrane pass occupies residues 155–175; that stretch reads GALIAAFAGVILMLIISAASI. The Cytoplasmic segment spans residues 176–195; sequence SRLAQQNKCCSTTASPSVVP.

This sequence belongs to the Casparian strip membrane proteins (CASP) family. As to quaternary structure, homodimer and heterodimers.

It localises to the cell membrane. This is CASP-like protein 1B1 from Arabidopsis lyrata subsp. lyrata (Lyre-leaved rock-cress).